The sequence spans 32 residues: U13-ctenitoxin-Pn1a (32 aa).

3 disulfides stabilise this stretch: C3/C17, C10/C21, and C16/C30.

In terms of tissue distribution, expressed by the venom gland.

Its subcellular location is the secreted. Acts as a neurotoxin. The chain is U13-ctenitoxin-Pn1a from Phoneutria nigriventer (Brazilian armed spider).